A 398-amino-acid polypeptide reads, in one-letter code: 4-hydroxy-3-methylbut-2-en-1-yl diphosphate synthase (ferredoxin) (398 aa).

[4Fe-4S] cluster-binding residues include Cys-306, Cys-309, Cys-340, and Glu-347.

Belongs to the IspG family. The cofactor is [4Fe-4S] cluster.

The enzyme catalyses (2E)-4-hydroxy-3-methylbut-2-enyl diphosphate + 2 oxidized [2Fe-2S]-[ferredoxin] + H2O = 2-C-methyl-D-erythritol 2,4-cyclic diphosphate + 2 reduced [2Fe-2S]-[ferredoxin] + H(+). It participates in isoprenoid biosynthesis; isopentenyl diphosphate biosynthesis via DXP pathway; isopentenyl diphosphate from 1-deoxy-D-xylulose 5-phosphate: step 5/6. Converts 2C-methyl-D-erythritol 2,4-cyclodiphosphate (ME-2,4cPP) into 1-hydroxy-2-methyl-2-(E)-butenyl 4-diphosphate. The chain is 4-hydroxy-3-methylbut-2-en-1-yl diphosphate synthase (ferredoxin) from Parasynechococcus marenigrum (strain WH8102).